The primary structure comprises 266 residues: UPF0294 protein Ent638_0743 (266 aa).

It belongs to the UPF0294 family.

The protein localises to the cytoplasm. The protein is UPF0294 protein Ent638_0743 of Enterobacter sp. (strain 638).